The sequence spans 150 residues: Cytochrome c oxidase subunit 5A, mitochondrial (150 aa).

Residues 1–41 constitute a mitochondrion transit peptide; it reads MLGTALRRCAVAAASRAGSRGLLHPTPVPGPTAAIQSIRCY. The SIFI-degron motif lies at 2–17; the sequence is LGTALRRCAVAAASRA. N6-acetyllysine is present on residues K87 and K113. The residue at position 141 (T141) is a Phosphothreonine.

This sequence belongs to the cytochrome c oxidase subunit 5A family. As to quaternary structure, component of the cytochrome c oxidase (complex IV, CIV), a multisubunit enzyme composed of 14 subunits. The complex is composed of a catalytic core of 3 subunits MT-CO1, MT-CO2 and MT-CO3, encoded in the mitochondrial DNA, and 11 supernumerary subunits COX4I, COX5A, COX5B, COX6A, COX6B, COX6C, COX7A, COX7B, COX7C, COX8 and NDUFA4, which are encoded in the nuclear genome. The complex exists as a monomer or a dimer and forms supercomplexes (SCs) in the inner mitochondrial membrane with NADH-ubiquinone oxidoreductase (complex I, CI) and ubiquinol-cytochrome c oxidoreductase (cytochrome b-c1 complex, complex III, CIII), resulting in different assemblies (supercomplex SCI(1)III(2)IV(1) and megacomplex MCI(2)III(2)IV(2)). Interacts with AFG1L. Interacts with RAB5IF. Post-translationally, in response to mitochondrial stress, the precursor protein is ubiquitinated by the SIFI complex in the cytoplasm before mitochondrial import, leading to its degradation. Within the SIFI complex, UBR4 initiates ubiquitin chain that are further elongated or branched by KCMF1.

The protein resides in the mitochondrion inner membrane. The protein operates within energy metabolism; oxidative phosphorylation. In terms of biological role, component of the cytochrome c oxidase, the last enzyme in the mitochondrial electron transport chain which drives oxidative phosphorylation. The respiratory chain contains 3 multisubunit complexes succinate dehydrogenase (complex II, CII), ubiquinol-cytochrome c oxidoreductase (cytochrome b-c1 complex, complex III, CIII) and cytochrome c oxidase (complex IV, CIV), that cooperate to transfer electrons derived from NADH and succinate to molecular oxygen, creating an electrochemical gradient over the inner membrane that drives transmembrane transport and the ATP synthase. Cytochrome c oxidase is the component of the respiratory chain that catalyzes the reduction of oxygen to water. Electrons originating from reduced cytochrome c in the intermembrane space (IMS) are transferred via the dinuclear copper A center (CU(A)) of subunit 2 and heme A of subunit 1 to the active site in subunit 1, a binuclear center (BNC) formed by heme A3 and copper B (CU(B)). The BNC reduces molecular oxygen to 2 water molecules using 4 electrons from cytochrome c in the IMS and 4 protons from the mitochondrial matrix. The protein is Cytochrome c oxidase subunit 5A, mitochondrial (COX5A) of Otolemur crassicaudatus (Brown greater galago).